The sequence spans 97 residues: Sm-like protein LSM3A (97 aa).

Ser2 bears the N-acetylserine mark. In terms of domain architecture, Sm spans 11 to 96 (EPLDLIRLSI…VILVSPPLRT (86 aa)).

Belongs to the snRNP Sm proteins family. In terms of assembly, component of the heptameric LSM1-LSM7 complex that forms a seven-membered ring structure with a donut shape. The LSM subunits are arranged in the order LSM1, LSM2, LSM3, LSM6, LSM5, LSM7 and LSM4. Component of the heptameric LSM2-LSM8 complex that forms a seven-membered ring structure with a donut shape. The LSM subunits are arranged in the order LSM8, LSM2, LSM3, LSM6, LSM5, LSM7 and LSM4. LSM3A subunit interacts only with its two neighboring subunits, LSM2 and LSM6A or LSM6B. Expressed in roots, leaves, stems, flowers and siliques.

The protein resides in the cytoplasm. Its subcellular location is the nucleus. Functionally, component of LSM protein complexes, which are involved in RNA processing. Component of the cytoplasmic LSM1-LSM7 complex which is involved in mRNA degradation by promoting decapping and leading to accurate 5'-3' mRNA decay. The cytoplasmic LSM1-LSM7 complex regulates developmental gene expression by the decapping of specific development-related transcripts. Component of the nuclear LSM2-LSM8 complex which is involved splicing nuclear mRNAs. LSM2-LSM8 binds directly to the U6 small nuclear RNAs (snRNAs) and is essential for accurate splicing of selected development-related mRNAs through the stabilization of the spliceosomal U6 snRNA. Plays a critical role in the regulation of development-related gene expression. The sequence is that of Sm-like protein LSM3A from Arabidopsis thaliana (Mouse-ear cress).